We begin with the raw amino-acid sequence, 138 residues long: Superoxide dismutase [Mn] (138 aa).

Ser1, His49, Asp133, and His137 together coordinate Mn(2+).

It belongs to the iron/manganese superoxide dismutase family. Mn(2+) serves as cofactor.

The catalysed reaction is 2 superoxide + 2 H(+) = H2O2 + O2. Functionally, destroys superoxide anion radicals which are normally produced within the cells and which are toxic to biological systems. The chain is Superoxide dismutase [Mn] (sodA) from Mycobacterium marinum.